A 548-amino-acid polypeptide reads, in one-letter code: 2-succinyl-5-enolpyruvyl-6-hydroxy-3-cyclohexene-1-carboxylate synthase (548 aa).

Belongs to the TPP enzyme family. MenD subfamily. As to quaternary structure, homodimer. Requires Mg(2+) as cofactor. The cofactor is Mn(2+). Thiamine diphosphate is required as a cofactor.

It catalyses the reaction isochorismate + 2-oxoglutarate + H(+) = 5-enolpyruvoyl-6-hydroxy-2-succinyl-cyclohex-3-ene-1-carboxylate + CO2. Its pathway is quinol/quinone metabolism; 1,4-dihydroxy-2-naphthoate biosynthesis; 1,4-dihydroxy-2-naphthoate from chorismate: step 2/7. The protein operates within quinol/quinone metabolism; menaquinone biosynthesis. In terms of biological role, catalyzes the thiamine diphosphate-dependent decarboxylation of 2-oxoglutarate and the subsequent addition of the resulting succinic semialdehyde-thiamine pyrophosphate anion to isochorismate to yield 2-succinyl-5-enolpyruvyl-6-hydroxy-3-cyclohexene-1-carboxylate (SEPHCHC). This chain is 2-succinyl-5-enolpyruvyl-6-hydroxy-3-cyclohexene-1-carboxylate synthase, found in Mycolicibacterium vanbaalenii (strain DSM 7251 / JCM 13017 / BCRC 16820 / KCTC 9966 / NRRL B-24157 / PYR-1) (Mycobacterium vanbaalenii).